Here is a 138-residue protein sequence, read N- to C-terminus: Acidic phospholipase A2 1 (138 aa).

A signal peptide spans 1-16; sequence MRTLWIMAVLLVGVDG. 7 disulfide bridges follow: Cys42–Cys131, Cys44–Cys60, Cys59–Cys110, Cys65–Cys138, Cys66–Cys103, Cys73–Cys97, and Cys91–Cys101. Ca(2+) contacts are provided by Tyr43, Gly45, and Gly47. The active site involves His63. Residue Asp64 participates in Ca(2+) binding. Asp104 is a catalytic residue.

This sequence belongs to the phospholipase A2 family. Group II subfamily. D49 sub-subfamily. In terms of assembly, homodimer. Ca(2+) is required as a cofactor. Expressed by the venom gland.

The protein resides in the secreted. It catalyses the reaction a 1,2-diacyl-sn-glycero-3-phosphocholine + H2O = a 1-acyl-sn-glycero-3-phosphocholine + a fatty acid + H(+). In terms of biological role, snake venom phospholipase A2 (PLA2) that is highly lipolytic and myolytic. PLA2 catalyzes the calcium-dependent hydrolysis of the 2-acyl groups in 3-sn-phosphoglycerides. The protein is Acidic phospholipase A2 1 of Protobothrops flavoviridis (Habu).